The primary structure comprises 92 residues: Acylphosphatase (92 aa).

Cysteines 5 and 49 form a disulfide. Residues 5–92 (CIIAWVYGRV…SGELTDFRIR (88 aa)) enclose the Acylphosphatase-like domain. Active-site residues include Arg20 and Asn38.

Belongs to the acylphosphatase family.

The catalysed reaction is an acyl phosphate + H2O = a carboxylate + phosphate + H(+). This Escherichia coli O6:H1 (strain CFT073 / ATCC 700928 / UPEC) protein is Acylphosphatase.